Here is a 79-residue protein sequence, read N- to C-terminus: Phosphoribosylformylglycinamidine synthase subunit PurS (79 aa).

It belongs to the PurS family. In terms of assembly, homodimer. Part of the FGAM synthase complex composed of 1 PurL, 1 PurQ and 2 PurS subunits.

The protein resides in the cytoplasm. The enzyme catalyses N(2)-formyl-N(1)-(5-phospho-beta-D-ribosyl)glycinamide + L-glutamine + ATP + H2O = 2-formamido-N(1)-(5-O-phospho-beta-D-ribosyl)acetamidine + L-glutamate + ADP + phosphate + H(+). The protein operates within purine metabolism; IMP biosynthesis via de novo pathway; 5-amino-1-(5-phospho-D-ribosyl)imidazole from N(2)-formyl-N(1)-(5-phospho-D-ribosyl)glycinamide: step 1/2. Part of the phosphoribosylformylglycinamidine synthase complex involved in the purines biosynthetic pathway. Catalyzes the ATP-dependent conversion of formylglycinamide ribonucleotide (FGAR) and glutamine to yield formylglycinamidine ribonucleotide (FGAM) and glutamate. The FGAM synthase complex is composed of three subunits. PurQ produces an ammonia molecule by converting glutamine to glutamate. PurL transfers the ammonia molecule to FGAR to form FGAM in an ATP-dependent manner. PurS interacts with PurQ and PurL and is thought to assist in the transfer of the ammonia molecule from PurQ to PurL. The chain is Phosphoribosylformylglycinamidine synthase subunit PurS from Mycobacterium leprae (strain TN).